Consider the following 336-residue polypeptide: Porphobilinogen deaminase (336 aa).

S-(dipyrrolylmethanemethyl)cysteine is present on Cys-251. Ser-327 and Ser-329 each carry phosphoserine.

The protein belongs to the HMBS family. Dipyrromethane serves as cofactor.

It catalyses the reaction 4 porphobilinogen + H2O = hydroxymethylbilane + 4 NH4(+). Its pathway is porphyrin-containing compound metabolism; protoporphyrin-IX biosynthesis; coproporphyrinogen-III from 5-aminolevulinate: step 2/4. In terms of biological role, tetrapolymerization of the monopyrrole PBG into the hydroxymethylbilane pre-uroporphyrinogen in several discrete steps. This is Porphobilinogen deaminase (hem3) from Schizosaccharomyces pombe (strain 972 / ATCC 24843) (Fission yeast).